Consider the following 143-residue polypeptide: uncharacterized protein (143 aa).

Cysteine 12 is an active-site residue.

Belongs to the ArsC family.

This is an uncharacterized protein from Rhodospirillum rubrum.